The chain runs to 255 residues: Glutamate racemase (255 aa).

Residues 7-8 and 39-40 contribute to the substrate site; these read DS and YG. Cysteine 70 functions as the Proton donor/acceptor in the catalytic mechanism. 71-72 contacts substrate; it reads NT. The active-site Proton donor/acceptor is cysteine 181. Position 182–183 (182–183) interacts with substrate; it reads TH.

It belongs to the aspartate/glutamate racemases family.

The catalysed reaction is L-glutamate = D-glutamate. It functions in the pathway cell wall biogenesis; peptidoglycan biosynthesis. Provides the (R)-glutamate required for cell wall biosynthesis. This Helicobacter acinonychis (strain Sheeba) protein is Glutamate racemase.